Consider the following 910-residue polypeptide: Anoctamin-6 (910 aa).

Over 1–300 (MKKMSRNVLL…YGEKIGIYFA (300 aa)) the chain is Cytoplasmic. A helical transmembrane segment spans residues 301 to 321 (WLGYYTQMLLLAAVVGVACFL). The Extracellular segment spans residues 322–375 (YGYLNQDNCTWSKEVCHPDIGGKIIMCPQCDRLCPFWKLNITCESSKKLCIFDS). A glycan (N-linked (GlcNAc...) asparagine) is linked at asparagine 329. Intrachain disulfides connect cysteine 330/cysteine 371, cysteine 337/cysteine 364, cysteine 348/cysteine 806, cysteine 351/cysteine 355, and cysteine 595/cysteine 600. N-linked (GlcNAc...) asparagine glycosylation is present at asparagine 361. Residues 376-396 (FGTLVFAVFMGVWVTLFLEFW) traverse the membrane as a helical segment. The Cytoplasmic portion of the chain corresponds to 397-455 (KRRQAELEYEWDTVELQQEEQARPEYEARCTHVVINEITQEEERIPFTAWGKCIRITLC). A helical membrane pass occupies residues 456–476 (ASAVFFWILLIIASVIGIIVY). Residues 477–509 (RLSVFIVFSAKLPKNINGTDPIQKYLTPQTATS) lie on the Extracellular side of the membrane. N-linked (GlcNAc...) asparagine glycosylation occurs at asparagine 493. A helical membrane pass occupies residues 510-530 (ITASIISFIIIMILNTIYEKV). Topologically, residues 531–551 (AIMITNFELPRTQTDYENSLT) are cytoplasmic. A helical membrane pass occupies residues 552–572 (MKMFLFQFVNYYSSCFYIAFF). Residues 573–601 (KGKFVGYPGDPVYWLGKYRNEECDPGGCL) lie on the Extracellular side of the membrane. The helical transmembrane segment at 602 to 621 (LELTTQLTIIMGGKAIWNNI) threads the bilayer. The Cytoplasmic segment spans residues 622 to 663 (QEVLLPWIMNLIGRFHRVSGSEKITPRWEQDYHLQPMGKLGL). 3 residues coordinate Ca(2+): glutamate 623, glutamate 666, and glutamate 669. The next 2 helical transmembrane spans lie at 664 to 684 (FYEY…VASF) and 685 to 705 (PLAP…DAWK). Residues 706-722 (LTTQFRRLVPEKAQDIG) lie on the Cytoplasmic side of the membrane. The helical transmembrane segment at 723–743 (AWQPIMQGIAILAVVTNAMII) threads the bilayer. Residues 744 to 836 (AFTSDMIPRL…YWHVIAAKLA (93 aa)) lie on the Extracellular side of the membrane. N-linked (GlcNAc...) asparagine glycans are attached at residues asparagine 777, asparagine 790, and asparagine 802. The chain crosses the membrane as a helical span at residues 837 to 857 (FIIVMEHVIYSVKFFISYAIP). Over 858–910 (DVSKRTKSKIQREKYLTQKLLHENHLKDMTKNMGVIAERMIEAVDNNLRPKSE) the chain is Cytoplasmic.

Belongs to the anoctamin family. As to quaternary structure, homodimer. Expressed in embryonic stem cell, fetal liver, retina, chronic myologenous leukemia and intestinal cancer.

The protein resides in the cell membrane. The enzyme catalyses a 1,2-diacyl-sn-glycero-3-phospho-L-serine(in) = a 1,2-diacyl-sn-glycero-3-phospho-L-serine(out). It catalyses the reaction a beta-D-galactosyl-(1&lt;-&gt;1')-N-acylsphing-4-enine(out) = a beta-D-galactosyl-(1&lt;-&gt;1')-N-acylsphing-4-enine(in). It carries out the reaction a 1,2-diacyl-sn-glycero-3-phosphocholine(in) = a 1,2-diacyl-sn-glycero-3-phosphocholine(out). Its activity is regulated as follows. Exhibits synergistic gating by Ca(2+) and voltage. Inhibited by some non-specific cation channel blockers such as: ruthenium red, 2-aminoethyl diphenylborinate (2APB), gadolinium and cadmium ions. (Microbial infection) Activated by SARS coronavirus-2/SARS-CoV-2 spike protein. Small-conductance calcium-activated nonselective cation (SCAN) channel which acts as a regulator of phospholipid scrambling in platelets and osteoblasts. Phospholipid scrambling results in surface exposure of phosphatidylserine which in platelets is essential to trigger the clotting system whereas in osteoblasts is essential for the deposition of hydroxyapatite during bone mineralization. Has calcium-dependent phospholipid scramblase activity; scrambles phosphatidylserine, phosphatidylcholine and galactosylceramide. Can generate outwardly rectifying chloride channel currents in airway epithelial cells and Jurkat T lymphocytes. In terms of biological role, (Microbial infection) Upon SARS coronavirus-2/SARS-CoV-2 infection, is activated by spike protein which increases the amplitude of spontaneous Ca(2+) signals and is required for spike-mediated syncytia. In Homo sapiens (Human), this protein is Anoctamin-6.